The following is a 394-amino-acid chain: Olfactomedin-like protein 3B (394 aa).

Positions 1-18 (MKATIFFLLLTVLAHSRS) are cleaved as a signal peptide. A coiled-coil region spans residues 29-94 (LENRMLAMEE…RVDRVEREMD (66 aa)). The region spanning 132-383 (VCVNIISSLK…QILYKLELKK (252 aa)) is the Olfactomedin-like domain. A disulfide bridge links C133 with C310. N169, N204, and N233 each carry an N-linked (GlcNAc...) asparagine glycan.

This sequence belongs to the OLFML3 family.

It is found in the secreted. Functionally, secreted scaffold protein that plays an essential role in dorsoventral patterning during early development. Stabilizes axial formation by restricting chordin (CHRD) activity on the dorsal side. Acts by facilitating the association between the tolloid proteases and their substrate chordin (CHRD), leading to enhance chordin (CHRD) degradation. This Danio rerio (Zebrafish) protein is Olfactomedin-like protein 3B (olfml3b).